The sequence spans 837 residues: Translation initiation factor IF-2 (837 aa).

Residues 94–253 form a disordered region; it reads KRSPDEIEAE…QHGFQNPTGP (160 aa). A compositionally biased stretch (basic and acidic residues) spans 95–148; sequence RSPDEIEAERQRELEEQRAAEEAERLKAEEAAARQRAEEEARKAEEAARAKAAE. Residues 149–171 are compositionally biased toward low complexity; sequence EAVSAQPAAAVEVAAAEPVAKPA. Basic and acidic residues-rich tracts occupy residues 172 to 188 and 220 to 229; these read AAEE…PKRD and STDEESDGYR. The segment covering 230 to 244 has biased composition (basic residues); sequence RGGRGGKSKLKKRNQ. Positions 337-506 constitute a tr-type G domain; it reads TRAPVVTVMG…LLQAEVLELK (170 aa). The G1 stretch occupies residues 346–353; the sequence is GHVDHGKT. 346 to 353 is a binding site for GTP; that stretch reads GHVDHGKT. The tract at residues 371–375 is G2; the sequence is GITQH. Residues 392–395 form a G3 region; that stretch reads DTPG. Residues 392–396 and 446–449 contribute to the GTP site; these read DTPGH and NKID. The tract at residues 446–449 is G4; sequence NKID. Residues 482–484 are G5; the sequence is SAK.

Belongs to the TRAFAC class translation factor GTPase superfamily. Classic translation factor GTPase family. IF-2 subfamily.

The protein resides in the cytoplasm. Functionally, one of the essential components for the initiation of protein synthesis. Protects formylmethionyl-tRNA from spontaneous hydrolysis and promotes its binding to the 30S ribosomal subunits. Also involved in the hydrolysis of GTP during the formation of the 70S ribosomal complex. The protein is Translation initiation factor IF-2 of Pseudomonas paraeruginosa (strain DSM 24068 / PA7) (Pseudomonas aeruginosa (strain PA7)).